Here is a 265-residue protein sequence, read N- to C-terminus: Zearalenone hydrolase (265 aa).

Zearalenone-binding residues include glycine 35, serine 105, and serine 106. Residue serine 105 is part of the active site. The active site involves glutamate 129. The zearalenone site is built by tryptophan 185, tyrosine 189, and histidine 243. Histidine 243 is a catalytic residue.

This sequence belongs to the AB hydrolase superfamily. Hydrolase RutD family. As to quaternary structure, homodimer.

The enzyme catalyses zearalenone + H2O = hydrolyzed zearalenone + H(+). In terms of biological role, lactonohydrolase that specifically hydrolyzes zearalenone (ZEN), an oestrogenic mycotoxin produced by numerous Fusarium specie, into a non-toxic alkylresorcinol product. The protein is Zearalenone hydrolase of Cladophialophora bantiana (strain ATCC 10958 / CDC1940 / 8579 / CBS 173.52) (Xylohypha bantiana).